A 375-amino-acid chain; its full sequence is Queuine tRNA-ribosyltransferase (375 aa).

Aspartate 94 serves as the catalytic Proton acceptor. Residues 94–98 (DSGGF), aspartate 148, glutamine 191, and glycine 218 contribute to the substrate site. The segment at 249-255 (GVGSPDD) is RNA binding. Catalysis depends on aspartate 268, which acts as the Nucleophile. The RNA binding; important for wobble base 34 recognition stretch occupies residues 273-277 (TRIAR). Residues cysteine 306, cysteine 308, cysteine 311, and histidine 337 each contribute to the Zn(2+) site.

The protein belongs to the queuine tRNA-ribosyltransferase family. In terms of assembly, homodimer. Within each dimer, one monomer is responsible for RNA recognition and catalysis, while the other monomer binds to the replacement base PreQ1. Zn(2+) serves as cofactor.

The catalysed reaction is 7-aminomethyl-7-carbaguanine + guanosine(34) in tRNA = 7-aminomethyl-7-carbaguanosine(34) in tRNA + guanine. Its pathway is tRNA modification; tRNA-queuosine biosynthesis. Catalyzes the base-exchange of a guanine (G) residue with the queuine precursor 7-aminomethyl-7-deazaguanine (PreQ1) at position 34 (anticodon wobble position) in tRNAs with GU(N) anticodons (tRNA-Asp, -Asn, -His and -Tyr). Catalysis occurs through a double-displacement mechanism. The nucleophile active site attacks the C1' of nucleotide 34 to detach the guanine base from the RNA, forming a covalent enzyme-RNA intermediate. The proton acceptor active site deprotonates the incoming PreQ1, allowing a nucleophilic attack on the C1' of the ribose to form the product. After dissociation, two additional enzymatic reactions on the tRNA convert PreQ1 to queuine (Q), resulting in the hypermodified nucleoside queuosine (7-(((4,5-cis-dihydroxy-2-cyclopenten-1-yl)amino)methyl)-7-deazaguanosine). This is Queuine tRNA-ribosyltransferase from Thermoanaerobacter sp. (strain X514).